The following is a 166-amino-acid chain: Interferon gamma (166 aa).

The N-terminal stretch at 1-23 is a signal peptide; it reads MKYTSYFLALLLCVLLGFSGSYG. Q24 is subject to Pyrrolidone carboxylic acid. N-linked (GlcNAc...) asparagine glycans are attached at residues N39 and N106.

The protein belongs to the type II (or gamma) interferon family. Homodimer. Interacts with IFNGR1 (via extracellular domain); this interaction promotes IFNGR1 dimerization. As to expression, released primarily from activated T lymphocytes.

The protein resides in the secreted. Type II interferon produced by immune cells such as T-cells and NK cells that plays crucial roles in antimicrobial, antiviral, and antitumor responses by activating effector immune cells and enhancing antigen presentation. Primarily signals through the JAK-STAT pathway after interaction with its receptor IFNGR1 to affect gene regulation. Upon IFNG binding, IFNGR1 intracellular domain opens out to allow association of downstream signaling components JAK2, JAK1 and STAT1, leading to STAT1 activation, nuclear translocation and transcription of IFNG-regulated genes. Many of the induced genes are transcription factors such as IRF1 that are able to further drive regulation of a next wave of transcription. Plays a role in class I antigen presentation pathway by inducing a replacement of catalytic proteasome subunits with immunoproteasome subunits. In turn, increases the quantity, quality, and repertoire of peptides for class I MHC loading. Increases the efficiency of peptide generation also by inducing the expression of activator PA28 that associates with the proteasome and alters its proteolytic cleavage preference. Up-regulates as well MHC II complexes on the cell surface by promoting expression of several key molecules such as cathepsins B/CTSB, H/CTSH, and L/CTSL. Participates in the regulation of hematopoietic stem cells during development and under homeostatic conditions by affecting their development, quiescence, and differentiation. The sequence is that of Interferon gamma (IFNG) from Bos indicus (Zebu).